The chain runs to 986 residues: DNA polymerase I (986 aa).

The region spanning 1–303 is the 5'-3' exonuclease domain; sequence MFMSAKSPLL…RTFIDKIQAF (303 aa). In terms of domain architecture, 3'-5' exonuclease spans 304–592; that stretch reads HRNFSDNQSP…MEDRGIRIDC (289 aa). The interval 308–327 is disordered; that stretch reads SDNQSPVPMGNEADNGEPKK. The polymerase stretch occupies residues 593 to 986; sequence DYLQTLSQQL…HRGSNWMEAK (394 aa).

The protein belongs to the DNA polymerase type-A family. As to quaternary structure, single-chain monomer with multiple functions.

The catalysed reaction is DNA(n) + a 2'-deoxyribonucleoside 5'-triphosphate = DNA(n+1) + diphosphate. Its function is as follows. In addition to polymerase activity, this DNA polymerase exhibits 3'-5' and 5'-3' exonuclease activity. The protein is DNA polymerase I (polA) of Synechocystis sp. (strain ATCC 27184 / PCC 6803 / Kazusa).